The sequence spans 385 residues: Cytochrome b (385 aa).

4 helical membrane passes run 32 to 52 (MGSL…FMAM), 76 to 98 (YILR…MHMA), 113 to 133 (LWNV…LGYC), and 179 to 199 (FFAL…MHLM). The heme b site is built by H82 and H96. The heme b site is built by H183 and H197. H202 is a binding site for a ubiquinone. Helical transmembrane passes span 225–245 (FIFK…LFVF), 289–309 (LLGV…PFTD), 321–341 (LSKF…QIGA), and 348–368 (YVLM…IIVP).

Belongs to the cytochrome b family. As to quaternary structure, fungal cytochrome b-c1 complex contains 10 subunits; 3 respiratory subunits, 2 core proteins and 5 low-molecular weight proteins. Cytochrome b-c1 complex is a homodimer. Heme b is required as a cofactor.

Its subcellular location is the mitochondrion inner membrane. Component of the ubiquinol-cytochrome c reductase complex (complex III or cytochrome b-c1 complex) that is part of the mitochondrial respiratory chain. The b-c1 complex mediates electron transfer from ubiquinol to cytochrome c. Contributes to the generation of a proton gradient across the mitochondrial membrane that is then used for ATP synthesis. This is Cytochrome b (COB) from Saccharomyces paradoxus (Yeast).